The sequence spans 561 residues: Acyl-CoA ligase ppsA (561 aa).

The N-linked (GlcNAc...) asparagine glycan is linked to Asn21. A helical membrane pass occupies residues 71–91 (SILYPALFLAIVGVGAVYMGA). AMP is bound at residue 203 to 214 (MFATSGTSGLPK). N-linked (GlcNAc...) asparagine glycosylation occurs at Asn396. An AMP-binding region spans residues 462–540 (ELEAELAQHP…DSIPRNSGGK (79 aa)).

This sequence belongs to the ATP-dependent AMP-binding enzyme family.

It is found in the membrane. The catalysed reaction is acetate + ATP + CoA = acetyl-CoA + ADP + phosphate. It catalyses the reaction propanoate + ATP + CoA = propanoyl-CoA + AMP + diphosphate. The protein operates within secondary metabolite biosynthesis. In terms of biological role, acyl-CoA ligase; part of the gene cluster that mediates the biosynthesis of 2,4'-dihydroxy-3'-methoxypropiophenone. The first step of the pathway is the conversion of acetate into acetyl-CoA by the acyl-CoA ligase ppsA. Acetyl-CoA is then used as a starter unit by the polyketide synthase ppsB and condensed with 4 malonyl-CoA unit to produce the pentaketide backbone. During polyketide extension, the polykedite chain is probably reduced and dehydrated by the KR and PT domains, respectively. O-methylation seems to be catalyzed by an unknown methyltransferase rather than by the CMeT domain of ppsB. Two hydroxylations and one further decarboxylation step catalyzed by yet unknown enzymes are then required to yield 4'-hydroxy-3'-methoxypropiophenone. PpsC functions as a carrier protein to transport 4'-hydroxy-3'-methoxypropiophenone to a specific cell compartment in which 4'-hydroxy-3'-methoxypropiophenone is hydroxylated to 2,4'-dihydroxy-3'-methoxypropiophenone by a still to be identified enzyme. This chain is Acyl-CoA ligase ppsA, found in Aspergillus oryzae (strain ATCC 42149 / RIB 40) (Yellow koji mold).